The primary structure comprises 354 residues: Non-structural protein NS2 (354 aa).

Disordered regions lie at residues 163–196 and 229–269; these read NERE…DNEA and DERD…THIT. Basic and acidic residues-rich tracts occupy residues 178–196 and 237–249; these read SREE…DNEA and DERG…KTLS. A compositionally biased stretch (acidic residues) spans 250-260; that stretch reads DDDDQGEDASD.

Single-stranded RNA-binding protein. The polypeptide is Non-structural protein NS2 (Segment-8) (Bluetongue virus 17 (isolate USA) (BTV 17)).